Here is a 251-residue protein sequence, read N- to C-terminus: NADPH-dependent oxidoreductase (251 aa).

Belongs to the flavin oxidoreductase frp family. It depends on FMN as a cofactor.

Reduces FMN, organic nitro compounds and disulfide DTNB. Involved in maintenance of the cellular redox state and the disulfide stress response. The sequence is that of NADPH-dependent oxidoreductase (nfrA) from Staphylococcus aureus (strain Mu50 / ATCC 700699).